The chain runs to 702 residues: Ribosomal RNA large subunit methyltransferase K/L (702 aa).

The THUMP domain maps to 43–154 (LVYQSLMWSR…KETASIALDL (112 aa)).

The protein belongs to the methyltransferase superfamily. RlmKL family.

The protein localises to the cytoplasm. It catalyses the reaction guanosine(2445) in 23S rRNA + S-adenosyl-L-methionine = N(2)-methylguanosine(2445) in 23S rRNA + S-adenosyl-L-homocysteine + H(+). The catalysed reaction is guanosine(2069) in 23S rRNA + S-adenosyl-L-methionine = N(2)-methylguanosine(2069) in 23S rRNA + S-adenosyl-L-homocysteine + H(+). Functionally, specifically methylates the guanine in position 2445 (m2G2445) and the guanine in position 2069 (m7G2069) of 23S rRNA. This chain is Ribosomal RNA large subunit methyltransferase K/L, found in Escherichia coli (strain SMS-3-5 / SECEC).